Here is a 496-residue protein sequence, read N- to C-terminus: Cytochrome P450 3A30 (496 aa).

C441 contacts heme.

The protein belongs to the cytochrome P450 family. Heme is required as a cofactor. In terms of tissue distribution, highly expressed in liver and intestine. Moderate expression in gill and spleen. Low expression in kidney, brain and heart.

It is found in the endoplasmic reticulum membrane. The protein resides in the microsome membrane. It carries out the reaction an organic molecule + reduced [NADPH--hemoprotein reductase] + O2 = an alcohol + oxidized [NADPH--hemoprotein reductase] + H2O + H(+). Its function is as follows. Putative steroid 6-beta-hydroxylase. The protein is Cytochrome P450 3A30 (cyp3a30) of Fundulus heteroclitus (Killifish).